The chain runs to 424 residues: MLDIKRIRTDFEAVAEKLATRGVDAAVLNEMKEIDAKRRNILVKVETLKAERNTVSAEIAQAKRNKENTDDKIAAMQNLSAEVKALDAELAEIDAKLTEFTTTLPNIPADSVPVGTDEDDNVEVRRWGTPREFDFEPKAHWDLGEDLGILDWERGGKVTGARFLFYKGLGARLERAIYNFMLDEHGKEGYTEVITPYIVNHDSMFGTGQYPKFKEDTFELSDTNFVLIPTAEVPLTNYYRDEILDGKDLPIYFTAMSPSFRSEAGSAGRDTRGLIRLHQFHKVEMVKFAKPEESYEELEKMTANAENILQKLNLPYRVVALSTGDMGFSTAKTYDLEVWIPAQNNYREISSCSNTEDFQARRAQIRYRDEADGKVKLLHTLNGSGLAVGRTVAAILENYQNEDGSVTIPEALRPYMGGAEVIKP.

230–232 (TAE) serves as a coordination point for L-serine. Residue 261-263 (RSE) coordinates ATP. E284 is a binding site for L-serine. An ATP-binding site is contributed by 348–351 (EISS). S384 contributes to the L-serine binding site.

The protein belongs to the class-II aminoacyl-tRNA synthetase family. Type-1 seryl-tRNA synthetase subfamily. In terms of assembly, homodimer. The tRNA molecule binds across the dimer.

Its subcellular location is the cytoplasm. It carries out the reaction tRNA(Ser) + L-serine + ATP = L-seryl-tRNA(Ser) + AMP + diphosphate + H(+). The enzyme catalyses tRNA(Sec) + L-serine + ATP = L-seryl-tRNA(Sec) + AMP + diphosphate + H(+). Its pathway is aminoacyl-tRNA biosynthesis; selenocysteinyl-tRNA(Sec) biosynthesis; L-seryl-tRNA(Sec) from L-serine and tRNA(Sec): step 1/1. Functionally, catalyzes the attachment of serine to tRNA(Ser). Is also able to aminoacylate tRNA(Sec) with serine, to form the misacylated tRNA L-seryl-tRNA(Sec), which will be further converted into selenocysteinyl-tRNA(Sec). This chain is Serine--tRNA ligase, found in Streptococcus pneumoniae (strain JJA).